The sequence spans 440 residues: Xaa-Pro dipeptidase (440 aa).

Mn(2+) is bound by residues Asp244, Asp255, His335, Glu380, and Glu419.

This sequence belongs to the peptidase M24B family. Bacterial-type prolidase subfamily. The cofactor is Mn(2+).

It carries out the reaction Xaa-L-Pro dipeptide + H2O = an L-alpha-amino acid + L-proline. Splits dipeptides with a prolyl residue in the C-terminal position. This is Xaa-Pro dipeptidase from Shewanella halifaxensis (strain HAW-EB4).